A 300-amino-acid polypeptide reads, in one-letter code: MDLPPQLSFALYVSAFALGFPLNLLAIRGAVSHAKLRLTPSLVYTLHLACSDLLLAITLPLKAVEALASGVWPLPLPFCPVFALAHFAPLYAGGGFLAALSAGRYLGAAFPFGYQAIRRPCYSWGVCVAIWALVLCHLGLALGLEAPRGWVDNTTSSLGINIPVNGSPVCLEAWDPDSARPARLSFSILLFFLPLVITAFCYVGCLRALVHSGLSHKRKLRAAWVAGGALLTLLLCLGPYNASNVASFINPDLEGSWRKLGLITGAWSVVLNPLVTGYLGTGPGQGTICVTRTPRGTIQK.

Over 1 to 8 the chain is Extracellular; sequence MDLPPQLS. The helical transmembrane segment at 9-31 threads the bilayer; sequence FALYVSAFALGFPLNLLAIRGAV. At 32 to 41 the chain is on the cytoplasmic side; sequence SHAKLRLTPS. The helical transmembrane segment at 42-64 threads the bilayer; the sequence is LVYTLHLACSDLLLAITLPLKAV. The Extracellular segment spans residues 65–79; that stretch reads EALASGVWPLPLPFC. An intrachain disulfide couples Cys79 to Cys170. A helical transmembrane segment spans residues 80 to 101; the sequence is PVFALAHFAPLYAGGGFLAALS. The Cytoplasmic portion of the chain corresponds to 102–121; sequence AGRYLGAAFPFGYQAIRRPC. Residues 122 to 142 traverse the membrane as a helical segment; the sequence is YSWGVCVAIWALVLCHLGLAL. At 143–178 the chain is on the extracellular side; sequence GLEAPRGWVDNTTSSLGINIPVNGSPVCLEAWDPDS. Asn153 carries N-linked (GlcNAc...) asparagine glycosylation. A helical membrane pass occupies residues 179 to 200; sequence ARPARLSFSILLFFLPLVITAF. The Cytoplasmic portion of the chain corresponds to 201 to 223; sequence CYVGCLRALVHSGLSHKRKLRAA. Residues 224-248 traverse the membrane as a helical segment; that stretch reads WVAGGALLTLLLCLGPYNASNVASF. The Extracellular portion of the chain corresponds to 249-256; it reads INPDLEGS. The helical transmembrane segment at 257–279 threads the bilayer; that stretch reads WRKLGLITGAWSVVLNPLVTGYL. Topologically, residues 280–300 are cytoplasmic; that stretch reads GTGPGQGTICVTRTPRGTIQK.

This sequence belongs to the G-protein coupled receptor 1 family. In terms of tissue distribution, expressed abundantly in pancreatic beta cells.

Its subcellular location is the cell membrane. G-protein coupled receptor for medium and long chain saturated and unsaturated fatty acids that plays an important role in glucose homeostasis. Fatty acid binding increases glucose-stimulated insulin secretion, and may also enhance the secretion of glucagon-like peptide 1 (GLP-1). May also play a role in bone homeostasis; receptor signaling activates pathways that inhibit osteoclast differentiation. Ligand binding leads to a conformation change that triggers signaling via G-proteins that activate phospholipase C, leading to an increase of the intracellular calcium concentration. Seems to act through a G(q) and G(i)-mediated pathway. Mediates the anti-inflammatory effects of omega-3 polyunsaturated fatty acids (PUFAs) via inhibition of NLRP3 inflammasome activation. The sequence is that of Free fatty acid receptor 1 (Ffar1) from Rattus norvegicus (Rat).